A 1098-amino-acid polypeptide reads, in one-letter code: uncharacterized protein (1098 aa).

This is an uncharacterized protein from Invertebrate iridescent virus 3 (IIV-3).